The chain runs to 133 residues: MSILKEFREFAVKGNVMDMAVGVIIGGAFGKIVSSLVSDVIMPPIGWLIGGVDFKDLAIQIAPAKEGAEAVMLKYGAFIQNIFDFLIIAIAVFSMVKAINSLKRPPEVAEAPAVAKGPTQEELLAEIRDLLKK.

2 helical membrane-spanning segments follow: residues 10–30 (FAVK…GAFG) and 76–96 (GAFI…FSMV).

It belongs to the MscL family. In terms of assembly, homopentamer.

The protein localises to the cell inner membrane. Functionally, channel that opens in response to stretch forces in the membrane lipid bilayer. May participate in the regulation of osmotic pressure changes within the cell. The sequence is that of Large-conductance mechanosensitive channel from Haemophilus ducreyi (strain 35000HP / ATCC 700724).